Here is a 724-residue protein sequence, read N- to C-terminus: WW domain-containing protein ZK1098.1 (724 aa).

WW domains lie at 78-111 (PSVE…KPDV) and 123-156 (QPQQ…KPDG). 6 consecutive FF domains span residues 224-282 (KKRQ…WKVQ), 295-349 (IKKS…CIDF), 353-422 (RDKE…HIKQ), 442-502 (QRKV…FVED), 507-562 (YTED…LIEK), and 578-632 (KRRL…YKNG). The tract at residues 626–724 (FNHYKNGTSG…KRKRRESEAD (99 aa)) is disordered. Over residues 630-639 (KNGTSGTTAG) the composition is skewed to polar residues. Residues 645 to 657 (KKKKKKDKKKKNK) are compositionally biased toward basic residues. Positions 681 to 692 (SKEDRMDDEERG) are enriched in basic and acidic residues. A compositionally biased stretch (basic residues) spans 693-703 (KKSKKSRKRSP).

The sequence is that of WW domain-containing protein ZK1098.1 from Caenorhabditis elegans.